Here is a 204-residue protein sequence, read N- to C-terminus: Glideosome-associated protein 45 (204 aa).

Residues 1-86 (MGNKCSRSKV…KEEIDYATQE (86 aa)) are disordered. The N-myristoyl glycine moiety is linked to residue glycine 2. Residues 2–29 (GNKCSRSKVKEPKRKDIDELAERENLKK) form a targets GAP45 to the cell membrane; however, dispensable for the formation of the glideosome complex and the association with the inner membrane complex region. The span at 9–53 (KVKEPKRKDIDELAERENLKKQSEEIIEEKPEEVVEQVEETHEEP) shows a compositional bias: basic and acidic residues. Acidic residues predominate over residues 54–73 (LEQEQELDEQKIEEEEEEPE). Serine 89 carries the phosphoserine; by CPK10 modification. At serine 103 the chain carries Phosphoserine; by CPK10 and PKB. Residue serine 149 is modified to Phosphoserine; by CPK10.

As to quaternary structure, component of the glideosome complex composed of GAP50, GAP45, MTIP and MyoA; the complex is formed during the late schizont stage and in merozoites. MyoA, MTIP and GAP45 probably form an initial complex in the cytoplasm which is then recruited to the outer face of the inner membrane complex via the interaction with GAP50. Interacts with GAP50; the interaction is independent of GAP45 phosphorylation status and can also occur independently of the formation of the glideosome complex. Post-translationally, phosphorylated at multiple sites. Phosphorylation increases during the schizont stage and peaks in segmented merozoites. May be phosphorylated by PKB. In schizonts, phosphorylated at Ser-89 and Ser-149 in response to phospholipase C-mediated calcium release. Phosphorylation at Ser-149 begins in early schizonts while phosphorylation at Ser-103 begins in late schizonts. Phosphorylation at Ser-89, Ser-103 and Ser-149 appears to be dispensable for GAP45 inner membrane complex localization or GAP45 inclusion in the glideosome complex. Phosphorylation is not required for interaction with GAP50; however, it may regulate the interaction with MTIP and MyoA. In terms of processing, N-myristoylated by NMT. N-myristoylation may contribute to the targeting of GAP45 to the inner membrane complex with the subsequent palmitoylation strengthening the interaction with the membrane. Palmitoylated. Palmitoylation appears to follow N-myristoylation and may strengthen the interaction with the inner membrane complex.

Its subcellular location is the inner membrane complex. Its function is as follows. Component of the glideosome complex, an inner membrane complex structure involved in parasite gliding motility and host cell invasion. During the asexual blood stage, required in schizonts to recruit MTIP and MyoA to the inner membrane complex where they assemble with GAP50 to form the glideosome complex. By regulating the formation of the glideosome, plays an essential role during merozoite invasion of host erythrocytes. The sequence is that of Glideosome-associated protein 45 from Plasmodium falciparum (isolate 3D7).